Here is a 378-residue protein sequence, read N- to C-terminus: Ribosomal RNA large subunit methyltransferase G (378 aa).

This sequence belongs to the methyltransferase superfamily. RlmG family.

Its subcellular location is the cytoplasm. The catalysed reaction is guanosine(1835) in 23S rRNA + S-adenosyl-L-methionine = N(2)-methylguanosine(1835) in 23S rRNA + S-adenosyl-L-homocysteine + H(+). Its function is as follows. Specifically methylates the guanine in position 1835 (m2G1835) of 23S rRNA. This is Ribosomal RNA large subunit methyltransferase G from Shigella boydii serotype 4 (strain Sb227).